We begin with the raw amino-acid sequence, 626 residues long: ATP-dependent zinc metalloprotease FtsH (626 aa).

Residues 1–7 lie on the Cytoplasmic side of the membrane; sequence MNGNRPN. Residues 8-28 form a helical membrane-spanning segment; sequence YISLIFAALVILSLFWLVRSF. Over 29–108 the chain is Periplasmic; the sequence is YFDTSAPSKM…VTGEKGVSSS (80 aa). The chain crosses the membrane as a helical span at residues 109–129; it reads FWVNVIGNVIFIGFLLFMFFF. Residues 130 to 626 are Cytoplasmic-facing; sequence MMRTISGRNN…RAAAGSEQDS (497 aa). 202–209 contacts ATP; it reads GPPGTGKT. His424 provides a ligand contact to Zn(2+). The active site involves Glu425. The Zn(2+) site is built by His428 and Asp501.

It in the central section; belongs to the AAA ATPase family. In the C-terminal section; belongs to the peptidase M41 family. In terms of assembly, homohexamer. Zn(2+) is required as a cofactor.

It localises to the cell inner membrane. Its function is as follows. Acts as a processive, ATP-dependent zinc metallopeptidase for both cytoplasmic and membrane proteins. Plays a role in the quality control of integral membrane proteins. The polypeptide is ATP-dependent zinc metalloprotease FtsH (Pseudothermotoga lettingae (strain ATCC BAA-301 / DSM 14385 / NBRC 107922 / TMO) (Thermotoga lettingae)).